Consider the following 893-residue polypeptide: DNA mismatch repair protein MutS (893 aa).

637–644 (GPNMGGKS) lines the ATP pocket.

Belongs to the DNA mismatch repair MutS family.

In terms of biological role, this protein is involved in the repair of mismatches in DNA. It is possible that it carries out the mismatch recognition step. This protein has a weak ATPase activity. The protein is DNA mismatch repair protein MutS of Burkholderia thailandensis (strain ATCC 700388 / DSM 13276 / CCUG 48851 / CIP 106301 / E264).